The primary structure comprises 461 residues: Vitamin K-dependent protein C (461 aa).

The first 18 residues, 1–18, serve as a signal peptide directing secretion; sequence MWQFRIFLLFASTWGISG. The propeptide occupies 19–41; it reads VSAHPDPVFSSSEGAHQVLRVRR. Positions 42–87 constitute a Gla domain; the sequence is ANSFLEEVRAGSLERECMEEICDFEEAQEIFQNVEDTLAFWIKYFD. E47, E48, E55, E57, E60, E61, E66, E67, E70, and E76 each carry 4-carboxyglutamate. An intrachain disulfide couples C58 to C63. Cystine bridges form between C91-C110, C100-C105, C104-C119, C121-C130, C139-C150, C146-C159, C161-C174, C182-C320, and C239-C255. EGF-like domains are found at residues 96–131 and 135–175; these read LDHQCDSPCCGHGTCIDGLGGFSCSCDKGWEGRFCQ and GFQD…MHCR. D112 carries the (3R)-3-hydroxyaspartate modification. One can recognise a Peptidase S1 domain in the interval 213 to 450; that stretch reads IVNGTLTKQG…YLKWIHSYIG (238 aa). Residue N215 is glycosylated (N-linked (GlcNAc...) asparagine). H254 functions as the Charge relay system in the catalytic mechanism. The N-linked (GlcNAc...) asparagine glycan is linked to N291. D300 acts as the Charge relay system in catalysis. N-linked (GlcNAc...) asparagine glycosylation is present at N355. Intrachain disulfides connect C373–C387 and C398–C426. The active-site Charge relay system is the S402.

This sequence belongs to the peptidase S1 family. Synthesized as a single chain precursor, which is cleaved into a light chain and a heavy chain held together by a disulfide bond. The enzyme is then activated by thrombin, which cleaves a tetradecapeptide from the amino end of the heavy chain; this reaction, which occurs at the surface of endothelial cells, is strongly promoted by thrombomodulin. Post-translationally, the vitamin K-dependent, enzymatic carboxylation of some Glu residues allows the modified protein to bind calcium. The iron and 2-oxoglutarate dependent 3-hydroxylation of aspartate and asparagine is (R) stereospecific within EGF domains. As to expression, plasma; synthesized in the liver.

Its subcellular location is the secreted. It localises to the golgi apparatus. It is found in the endoplasmic reticulum. It catalyses the reaction Degradation of blood coagulation factors Va and VIIIa.. In terms of biological role, protein C is a vitamin K-dependent serine protease that regulates blood coagulation by inactivating factors Va and VIIIa in the presence of calcium ions and phospholipids. Exerts a protective effect on the endothelial cell barrier function. The protein is Vitamin K-dependent protein C (Proc) of Rattus norvegicus (Rat).